Reading from the N-terminus, the 616-residue chain is Replication protein A 70 kDa DNA-binding subunit (616 aa).

Met-1 is modified (N-acetylmethionine). Glycyl lysine isopeptide (Lys-Gly) (interchain with G-Cter in ubiquitin) cross-links involve residues Lys-22 and Lys-88. A disordered region spans residues 121–154 (GLGQPQVAPPAPAASPAASSRPQPQNGSSGMGST). Low complexity predominate over residues 134-145 (ASPAASSRPQPQ). N6-acetyllysine; alternate occurs at positions 163 and 167. Residues Lys-163 and Lys-167 each participate in a glycyl lysine isopeptide (Lys-Gly) (interchain with G-Cter in ubiquitin); alternate cross-link. Residue Thr-180 is modified to Phosphothreonine. Lys-183 participates in a covalent cross-link: Glycyl lysine isopeptide (Lys-Gly) (interchain with G-Cter in ubiquitin). The residue at position 191 (Thr-191) is a Phosphothreonine. Residues 197–281 (WTICARVTNK…VKNDYEMTFN (85 aa)) constitute a DNA-binding region (OB). Residues Lys-220 and Lys-244 each participate in a glycyl lysine isopeptide (Lys-Gly) (interchain with G-Cter in ubiquitin) cross-link. The residue at position 259 (Lys-259) is an N6-acetyllysine; alternate. Lys-259 is covalently cross-linked (Glycyl lysine isopeptide (Lys-Gly) (interchain with G-Cter in ubiquitin); alternate). Glycyl lysine isopeptide (Lys-Gly) (interchain with G-Cter in ubiquitin) cross-links involve residues Lys-267 and Lys-331. Position 384 is a phosphoserine (Ser-384). Glycyl lysine isopeptide (Lys-Gly) (interchain with G-Cter in ubiquitin) cross-links involve residues Lys-410 and Lys-431. Lys-449 participates in a covalent cross-link: Glycyl lysine isopeptide (Lys-Gly) (interchain with G-Cter in SUMO). A Glycyl lysine isopeptide (Lys-Gly) (interchain with G-Cter in ubiquitin) cross-link involves residue Lys-458. A C4-type zinc finger spans residues 481-503 (CPTQDCNKKVIDQQNGLYRCEKC). A Glycyl lysine isopeptide (Lys-Gly) (interchain with G-Cter in ubiquitin) cross-link involves residue Lys-553. Lys-577 is covalently cross-linked (Glycyl lysine isopeptide (Lys-Gly) (interchain with G-Cter in SUMO)).

The protein belongs to the replication factor A protein 1 family. As to quaternary structure, component of the canonical replication protein A complex (RPA), a heterotrimer composed of RPA1, RPA2 and RPA3. Also a component of the aRPA, the alternative replication protein A complex, a trimeric complex similar to the replication protein A complex/RPA but where RPA1 and RPA3 are associated with RPA4 instead of RPA2. The DNA-binding activity may reside exclusively on the RPA1 subunit. Interacts with PRPF19; the PRP19-CDC5L complex is recruited to the sites of DNA repair where it ubiquitinates the replication protein A complex (RPA). Interacts with RIPK1. Interacts with the polymerase alpha subunit POLA1/p180; this interaction stabilizes the replicative complex and reduces the misincorporation rate of DNA polymerase alpha by acting as a fidelity clamp. Interacts with RAD51 and SENP6 to regulate DNA repair. Interacts with HELB; this interaction promotes HELB recruitment to chromatin following DNA damage. Interacts with PRIMPOL; leading to recruit PRIMPOL on chromatin and stimulate its DNA primase activity. Interacts with XPA; the interaction is direct and associates XPA with the RPA complex. Interacts with ETAA1; the interaction is direct and promotes ETAA1 recruitment at stalled replication forks. Interacts with RPA1; this interaction associates HROB with the RPA complex. Interacts (when poly-ADP-ribosylated) with HTATSF1. Interacts with BRIP1/FANCJ via this RPA1 subunit; following DNA damage they colocalize in foci in the nucleus. Post-translationally, DNA damage-induced 'Lys-63'-linked polyubiquitination by PRPF19 mediates ATRIP recruitment to the RPA complex at sites of DNA damage and activation of ATR. Ubiquitinated by RFWD3 at stalled replication forks in response to DNA damage: ubiquitination by RFWD3 does not lead to degradation by the proteasome and promotes removal of the RPA complex from stalled replication forks, promoting homologous recombination. Sumoylated on lysine residues Lys-449 and Lys-577, with Lys-449 being the major site. Sumoylation promotes recruitment of RAD51 to the DNA damage foci to initiate DNA repair through homologous recombination. Desumoylated by SENP6. In terms of processing, poly-ADP-ribosylated by PARP1; promoting recruitment of HTATSF1.

It is found in the nucleus. The protein resides in the PML body. In terms of biological role, as part of the heterotrimeric replication protein A complex (RPA/RP-A), binds and stabilizes single-stranded DNA intermediates that form during DNA replication or upon DNA stress. It prevents their reannealing and in parallel, recruits and activates different proteins and complexes involved in DNA metabolism. Thereby, it plays an essential role both in DNA replication and the cellular response to DNA damage. In the cellular response to DNA damage, the RPA complex controls DNA repair and DNA damage checkpoint activation. Through recruitment of ATRIP activates the ATR kinase a master regulator of the DNA damage response. It is required for the recruitment of the DNA double-strand break repair factors RAD51 and RAD52 to chromatin in response to DNA damage. Also recruits to sites of DNA damage proteins like XPA and XPG that are involved in nucleotide excision repair and is required for this mechanism of DNA repair. Also plays a role in base excision repair (BER) probably through interaction with UNG. Also recruits SMARCAL1/HARP, which is involved in replication fork restart, to sites of DNA damage. Plays a role in telomere maintenance. As part of the alternative replication protein A complex, aRPA, binds single-stranded DNA and probably plays a role in DNA repair. Compared to the RPA2-containing, canonical RPA complex, may not support chromosomal DNA replication and cell cycle progression through S-phase. The aRPA may not promote efficient priming by DNA polymerase alpha but could support DNA synthesis by polymerase delta in presence of PCNA and replication factor C (RFC), the dual incision/excision reaction of nucleotide excision repair and RAD51-dependent strand exchange. RPA stimulates 5'-3' helicase activity of the BRIP1/FANCJ. In Homo sapiens (Human), this protein is Replication protein A 70 kDa DNA-binding subunit (RPA1).